Reading from the N-terminus, the 314-residue chain is Torsin-2A (314 aa).

The first 19 residues, 1 to 19 (MAVRWWIIPMLLLVPGSSG), serve as a signal peptide directing secretion. Position 86–93 (86–93 (GWSGTGKT)) interacts with ATP. N-linked (GlcNAc...) asparagine glycosylation is found at Asn142 and Asn283.

This sequence belongs to the ClpA/ClpB family. Torsin subfamily. In terms of assembly, homohexamer.

Its subcellular location is the endoplasmic reticulum lumen. This chain is Torsin-2A (tor2a), found in Xenopus laevis (African clawed frog).